We begin with the raw amino-acid sequence, 238 residues long: MTTFDGDTSAGEAVDLTEANAFQDAAAPAEEVDPAAALKAELRSKPGDWYVVHSYAGYENKVKANLETRVQNLDVGDYIFQVEVPTEEVTEIKNGQRKQVNRKVLPGYILVRMDLTDDSWAAVRNTPGVTGFVGATSRPSALALDDVVKFLLPRGSTRKAAKGAASTAAAAEAGGLERPVVEVDYEVGESVTVMDGPFATLPATISEVNAEQQKLKVLVSIFGRETPVELTFGQVSKI.

Belongs to the NusG family.

Participates in transcription elongation, termination and antitermination. The protein is Transcription termination/antitermination protein NusG of Mycobacterium tuberculosis (strain CDC 1551 / Oshkosh).